The sequence spans 173 residues: Acireductone dioxygenase 1 (173 aa).

Positions 96, 98, 102, and 140 each coordinate Fe(2+). His96, His98, Glu102, and His140 together coordinate Ni(2+).

Belongs to the acireductone dioxygenase (ARD) family. In terms of assembly, monomer. The cofactor is Fe(2+). Ni(2+) is required as a cofactor.

It carries out the reaction 1,2-dihydroxy-5-(methylsulfanyl)pent-1-en-3-one + O2 = 3-(methylsulfanyl)propanoate + CO + formate + 2 H(+). It catalyses the reaction 1,2-dihydroxy-5-(methylsulfanyl)pent-1-en-3-one + O2 = 4-methylsulfanyl-2-oxobutanoate + formate + 2 H(+). The protein operates within amino-acid biosynthesis; L-methionine biosynthesis via salvage pathway; L-methionine from S-methyl-5-thio-alpha-D-ribose 1-phosphate: step 5/6. In terms of biological role, catalyzes 2 different reactions between oxygen and the acireductone 1,2-dihydroxy-3-keto-5-methylthiopentene (DHK-MTPene) depending upon the metal bound in the active site. Fe-containing acireductone dioxygenase (Fe-ARD) produces formate and 2-keto-4-methylthiobutyrate (KMTB), the alpha-ketoacid precursor of methionine in the methionine recycle pathway. Ni-containing acireductone dioxygenase (Ni-ARD) produces methylthiopropionate, carbon monoxide and formate, and does not lie on the methionine recycle pathway. The polypeptide is Acireductone dioxygenase 1 (Pectobacterium atrosepticum (strain SCRI 1043 / ATCC BAA-672) (Erwinia carotovora subsp. atroseptica)).